The primary structure comprises 37 residues: Omega-agatoxin-Aa3d (37 aa).

Belongs to the neurotoxin 04 (omega-agtx) family. 03 (type II/III omega-agtx) subfamily. In terms of processing, disulfide bonds are present. In terms of tissue distribution, expressed by the venom gland.

It localises to the secreted. Omega-agatoxins are antagonists of voltage-gated calcium channels. This toxin blocks calcium channels in insect central neurons but not at peripheral neuromuscular junctions. In vertebrates, it is broadly active against all high-threshold Cav1/CACNA1 channels and Cav2.2/CACNA1B channels. This chain is Omega-agatoxin-Aa3d, found in Agelenopsis aperta (North American funnel-web spider).